The sequence spans 92 residues: DNA-directed RNA polymerase subunit Rpo11 (92 aa).

Belongs to the archaeal Rpo11/eukaryotic RPB11/RPC19 RNA polymerase subunit family. Part of the RNA polymerase complex.

The protein resides in the cytoplasm. It catalyses the reaction RNA(n) + a ribonucleoside 5'-triphosphate = RNA(n+1) + diphosphate. Functionally, DNA-dependent RNA polymerase (RNAP) catalyzes the transcription of DNA into RNA using the four ribonucleoside triphosphates as substrates. The chain is DNA-directed RNA polymerase subunit Rpo11 from Saccharolobus islandicus (strain Y.N.15.51 / Yellowstone #2) (Sulfolobus islandicus).